The sequence spans 201 residues: Probable nicotinate-nucleotide adenylyltransferase (201 aa).

This sequence belongs to the NadD family.

The enzyme catalyses nicotinate beta-D-ribonucleotide + ATP + H(+) = deamido-NAD(+) + diphosphate. It functions in the pathway cofactor biosynthesis; NAD(+) biosynthesis; deamido-NAD(+) from nicotinate D-ribonucleotide: step 1/1. Its function is as follows. Catalyzes the reversible adenylation of nicotinate mononucleotide (NaMN) to nicotinic acid adenine dinucleotide (NaAD). The polypeptide is Probable nicotinate-nucleotide adenylyltransferase (Neisseria meningitidis serogroup C / serotype 2a (strain ATCC 700532 / DSM 15464 / FAM18)).